The following is a 534-amino-acid chain: DNA-directed RNA polymerase III subunit RPC3 (534 aa).

Positions 161–181 (PSVPTTENSDPGPPPPAPTLV) are disordered. The residue at position 194 (serine 194) is a Phosphoserine. Positions 197–228 (GKGKRRRSSDEDAAGEPKAKRPKYTTDNKEPI) are disordered. Residues 211–228 (GEPKAKRPKYTTDNKEPI) are compositionally biased toward basic and acidic residues.

It belongs to the eukaryotic RPC3/POLR3C RNA polymerase subunit family. In terms of assembly, component of the RNA polymerase III complex consisting of 17 subunits: a ten-subunit horseshoe-shaped catalytic core composed of POLR3A/RPC1, POLR3B/RPC2, POLR1C/RPAC1, POLR1D/RPAC2, POLR3K/RPC10, POLR2E/RPABC1, POLR2F/RPABC2, POLR2H/RPABC3, POLR2K/RPABC4 and POLR2L/RPABC5; a mobile stalk composed of two subunits POLR3H/RPC8 and CRCP/RPC9, protruding from the core and functioning primarily in transcription initiation; and additional subunits homologous to general transcription factors of the RNA polymerase II machinery, POLR3C/RPC3-POLR3F/RPC6-POLR3G/RPC7 heterotrimer required for transcription initiation and POLR3D/RPC4-POLR3E/RPC5 heterodimer involved in both transcription initiation and termination. Directly interacts with POLR3G/RPC7 and POLR3GL. Directly interacts with POLR3F/RPC6. Interacts with GTF3C4. As part of the RNA polymerase III complex, interacts with PKP2.

Its subcellular location is the nucleus. Its function is as follows. DNA-dependent RNA polymerase catalyzes the transcription of DNA into RNA using the four ribonucleoside triphosphates as substrates. Specific peripheric component of RNA polymerase III (Pol III) which synthesizes small non-coding RNAs including 5S rRNA, snRNAs, tRNAs and miRNAs from at least 500 distinct genomic loci. Part of POLR3C/RPC3-POLR3F/RPC6-POLR3G/RPC7 heterotrimer, coordinates the dynamics of Pol III stalk and clamp modules during the transition from apo to elongation state. Pol III plays a key role in sensing and limiting infection by intracellular bacteria and DNA viruses. Acts as a nuclear and cytosolic DNA sensor involved in innate immune response. Can sense non-self dsDNA that serves as template for transcription into dsRNA. The non-self RNA polymerase III transcripts, such as Epstein-Barr virus-encoded RNAs (EBERs) induce type I interferon and NF-kappa-B through the RIG-I pathway. Preferentially binds single-stranded DNA (ssDNA) in a sequence-independent manner. This is DNA-directed RNA polymerase III subunit RPC3 from Homo sapiens (Human).